Reading from the N-terminus, the 395-residue chain is L-methionine gamma-lyase (395 aa).

Pyridoxal 5'-phosphate is bound by residues 56–58 (YTR) and 86–87 (GM). Tyr-111 provides a ligand contact to substrate. Pyridoxal 5'-phosphate is bound at residue 206–208 (SVT). Position 209 is an N6-(pyridoxal phosphate)lysine (Lys-209). Arg-373 provides a ligand contact to substrate.

Belongs to the trans-sulfuration enzymes family. L-methionine gamma-lyase subfamily. As to quaternary structure, homotetramer. Pyridoxal 5'-phosphate is required as a cofactor.

It carries out the reaction L-methionine + H2O = methanethiol + 2-oxobutanoate + NH4(+). It catalyses the reaction L-homocysteine + H2O = 2-oxobutanoate + hydrogen sulfide + NH4(+) + H(+). In terms of biological role, catalyzes the alpha,gamma-elimination of L-methionine to produce methanethiol, 2-oxobutanoate and ammonia; methanethiol (methyl mercaptan) is considered to be one of the main causes of the oral malodor associated with periodontitis. Also displays homocysteine desulfhydrase activity, degrading homocysteine to produce hydrogen sulfide, 2-oxobutanoate and ammonia. L-cysteine and S-methyl-L-cysteine are poor substrates for the enzyme. Functionally, plays an important role in the resistance of F.nucleatum to the antibacterial agent 3-chloro-DL-alanine (3CA), thanks to its 3CA chloride-lyase (deaminating) activity. The sequence is that of L-methionine gamma-lyase from Fusobacterium nucleatum subsp. polymorphum (Fusobacterium polymorphum).